The primary structure comprises 498 residues: Archaemetzincin-1 (498 aa).

Histidine 261 is a Zn(2+) binding site. Catalysis depends on glutamate 262, which acts as the Proton acceptor. Residues histidine 265, cysteine 272, cysteine 277, cysteine 296, and cysteine 299 each coordinate Zn(2+). Residues 332–381 form a disordered region; the sequence is QEAGEPSVWEDTPPASADSGMCCESDSEPGTSVSEPLTPDAGSHTFASGP.

This sequence belongs to the peptidase M54 family. Zn(2+) is required as a cofactor.

Its function is as follows. Probable zinc metalloprotease. The polypeptide is Archaemetzincin-1 (AMZ1) (Homo sapiens (Human)).